Consider the following 220-residue polypeptide: HTH-type transcriptional repressor KstR (220 aa).

An HTH tetR-type domain is found at 36–96 (RERRKRILDA…SALGREFSRI (61 aa)). The H-T-H motif DNA-binding region spans 59–78 (QMRAVADRADVAVGTLYRYF).

Homodimer.

Functionally, controls the expression of genes used for utilizing diverse lipids as energy sources. In Mycobacterium tuberculosis (strain ATCC 25618 / H37Rv), this protein is HTH-type transcriptional repressor KstR (kstR).